Reading from the N-terminus, the 78-residue chain is Signal peptidase complex subunit 1 (78 aa).

At 1 to 18 (MNYLEGTIDFAGQLRCQK) the chain is on the cytoplasmic side. The chain crosses the membrane as a helical span at residues 19–38 (YMNYGLCTSAVISYIYGYLV). The Lumenal portion of the chain corresponds to 39–42 (QDSY). A helical membrane pass occupies residues 43–63 (CVIKLFLILASLVALVCLPAW). Over 64–78 (SMYNKNPLKFQKKKE) the chain is Cytoplasmic.

The protein belongs to the SPCS1 family. As to quaternary structure, component of the signal peptidase complex (SPC) composed of a catalytic subunit sec11 and three accessory subunits spc1, spc2 and spc3. The complex induces a local thinning of the ER membrane which is used to measure the length of the signal peptide (SP) h-region of protein substrates. This ensures the selectivity of the complex towards h-regions shorter than 18-20 amino acids. SPC associates with the translocon complex.

It is found in the endoplasmic reticulum membrane. Functionally, component of the signal peptidase complex (SPC) which catalyzes the cleavage of N-terminal signal sequences from nascent proteins as they are translocated into the lumen of the endoplasmic reticulum. Dispensable for SPC enzymatic activity. The sequence is that of Signal peptidase complex subunit 1 from Schizosaccharomyces pombe (strain 972 / ATCC 24843) (Fission yeast).